The primary structure comprises 381 residues: MNTNNKNDFKSVYVSSRARDNILKYKYTGCDSSFISIHIMNHFWNWFVNLFPRSFAPNLITLFGFISIIVSYFVTLYYMDRMNGVAPKWLYLFNALCIFIYQTMDACDGKQARRVQASSGLGELFDHGCDAMITYLVMQTFQSSLQVGVNQISFFTTLWIMYVFFMAQLEQYSTGVMNLGHFGPTESQFSMMAGHIFTFFYGEQFWFNTIKFESFEIQYNHLVLLVVILGGVGTILLNTFSILKNGNESILTNIINLVPISILLGVSIYWGKYSTVNIFETAPHYFMGIFGILFALVTGKLILARICMDKLSPIQLIMLPLIAVILNIYKFNGELFDEILFTKVYFFVVFIVYIHFAYDVVTSLTKVLDIYCFTLKNKKQT.

9 helical membrane passes run 59-79 (LITL…LYYM), 84-104 (GVAP…YQTM), 147-167 (VGVN…FFMA), 190-210 (SMMA…FNTI), 222-242 (LVLL…TFSI), 250-270 (ILTN…SIYW), 284-304 (HYFM…LILA), 311-331 (LSPI…IYKF), and 344-364 (VYFF…VTSL).

This sequence belongs to the CDP-alcohol phosphatidyltransferase class-I family.

It localises to the membrane. This is an uncharacterized protein from Dictyostelium discoideum (Social amoeba).